The primary structure comprises 465 residues: A-type ATP synthase subunit B (465 aa).

Belongs to the ATPase alpha/beta chains family. Has multiple subunits with at least A(3), B(3), C, D, E, F, H, I and proteolipid K(x).

The protein localises to the cell membrane. Component of the A-type ATP synthase that produces ATP from ADP in the presence of a proton gradient across the membrane. The B chain is a regulatory subunit. The protein is A-type ATP synthase subunit B of Thermococcus onnurineus (strain NA1).